Consider the following 290-residue polypeptide: MYG1 protein CPn_0489/CP_0265/CPj0489/CpB0509 (290 aa).

The protein belongs to the MYG1 family.

This is MYG1 protein CPn_0489/CP_0265/CPj0489/CpB0509 from Chlamydia pneumoniae (Chlamydophila pneumoniae).